The primary structure comprises 124 residues: Small ribosomal subunit protein uS13 (124 aa).

The disordered stretch occupies residues 87–124; that stretch reads GSYRGNRHRKRLPVRGQRTKTNSRTRKGKRRTVGSKTK. The segment covering 91-124 has biased composition (basic residues); the sequence is GNRHRKRLPVRGQRTKTNSRTRKGKRRTVGSKTK.

The protein belongs to the universal ribosomal protein uS13 family. As to quaternary structure, part of the 30S ribosomal subunit. Forms a loose heterodimer with protein S19. Forms two bridges to the 50S subunit in the 70S ribosome.

Functionally, located at the top of the head of the 30S subunit, it contacts several helices of the 16S rRNA. In the 70S ribosome it contacts the 23S rRNA (bridge B1a) and protein L5 of the 50S subunit (bridge B1b), connecting the 2 subunits; these bridges are implicated in subunit movement. Contacts the tRNAs in the A and P-sites. The polypeptide is Small ribosomal subunit protein uS13 (Elusimicrobium minutum (strain Pei191)).